Here is a 318-residue protein sequence, read N- to C-terminus: Homeobox-leucine zipper protein ATHB-4 (318 aa).

2 disordered regions span residues 1-23 (MGER…KEPS) and 128-165 (ARGG…RKKL). Low complexity predominate over residues 8 to 17 (LGLSLSLGNS). Basic and acidic residues predominate over residues 128–140 (ARGGDENEAERAS). A DNA-binding region (homeobox) is located at residues 160–219 (GSRKKLRLSKDQALVLEETFKEHSTLNPKQKLALAKQLNLRARQVEVWFQNRRARTKLKQ). The leucine-zipper stretch occupies residues 227–248 (LKRCCDNLTEENRRLQKEVSEL).

It belongs to the HD-ZIP homeobox family. Class II subfamily.

Its subcellular location is the nucleus. Functionally, probable transcription factor. The chain is Homeobox-leucine zipper protein ATHB-4 (ATHB-4) from Arabidopsis thaliana (Mouse-ear cress).